The primary structure comprises 264 residues: Spermidine/putrescine transport system permease protein PotC (264 aa).

The Cytoplasmic portion of the chain corresponds to 1–7 (MIGRLLR). Residues 8-27 (GGFMTAIYAYLYIPIIILIV) traverse the membrane as a helical segment. Over 28–65 (NSFNSSRFGINWQGFTTKWYSLLMNNDSLLQAAQHSLT) the chain is Periplasmic. The 189-residue stretch at 60 to 248 (AQHSLTMAVF…VLSLVMVIAS (189 aa)) folds into the ABC transmembrane type-1 domain. Residues 66 to 85 (MAVFSATFATLIGSLTAVAL) traverse the membrane as a helical segment. Residues 86-100 (YRYRFRGKPFVSGML) are Cytoplasmic-facing. A helical membrane pass occupies residues 101–120 (FVVMMSPDIVMAISLLVLFM). Residues 121–128 (LLGIQLGF) lie on the Periplasmic side of the membrane. Residues 129-148 (WSLLFSHITFCLPFVVVTVY) form a helical membrane-spanning segment. The Cytoplasmic segment spans residues 149 to 176 (SRLKGFDVRMLEAAKDLGASEFTILRKI). Residues 177 to 196 (ILPLAMPAVAAGWVLSFTLS) form a helical membrane-spanning segment. Over 197 to 231 (MDDVVVSSFVTGPSYEILPLKIYSMVKVGVSPEVN) the chain is Periplasmic. The helical transmembrane segment at 232–251 (ALATILLVLSLVMVIASQLI) threads the bilayer. Over 252-264 (ARDKTKGNTGDVK) the chain is Cytoplasmic.

The protein belongs to the binding-protein-dependent transport system permease family. CysTW subfamily.

It is found in the cell inner membrane. Required for the activity of the bacterial periplasmic transport system of putrescine and spermidine. This Escherichia coli O157:H7 protein is Spermidine/putrescine transport system permease protein PotC (potC).